A 544-amino-acid chain; its full sequence is MVQEELSLFRITTGYFFLLWYIIILVAAYSGFFEILFNFRNRPILHTKQQANHQNDPESDDEEIYEGVTIIRPIKGIDPELTSCLESSFCQNYPRSKLQILFCVDDPNDPSIPIIQKLIAKYPTVDAQILTSESYNSQTKTSDDHYGPNPKVNNLAKGFVHAKYDILWVMDSNVWASSNILKNSVISLNGNLNMSRKMGQSRPVKLVHHVPLALSINNTTRSDDFIGGQDLEITAMTPVPSSESLNSQLVKRKSSPKSNNSLNVHPGFTYSKFSKKLGAELDEMFLHTSHSKFYVSLNNLAVAPCVNGKSNIYRRSDLDQSVRLIPHKDSPFFKDPKVKQDAGYYTSLGVGHAIKFFARYIGEDNMIGIALWENTQGRTGLTGDVVVQPYSGSENNAVKDYIQRRVRWLRVRKYMVLLATLIEPTTESIICGIYGTYAISTVFFGTWFNKYWFVMHMLIWMLTDYVQYHTLINHTLDVKNITYLPNWLNESIPPKQRNCLQWGYIWILRELLALPIWIIAMIGHEIDWRGRPFRIKKDLTAEEM.

Residues 1 to 15 are Lumenal-facing; that stretch reads MVQEELSLFRITTGY. A helical transmembrane segment spans residues 16–36; it reads FFLLWYIIILVAAYSGFFEIL. Residues 37-427 lie on the Cytoplasmic side of the membrane; it reads FNFRNRPILH…LATLIEPTTE (391 aa). Residue D109 is a short sequence motif, D1. A short sequence motif (D2) is located at residue D171. Position 364 (D364) is a short sequence motif, D3. The active-site Proton acceptor is the D364. A (Q/R)XXRW motif is present at residues 404–408; it reads RRVRW. Residues 428–448 traverse the membrane as a helical segment; it reads SIICGIYGTYAISTVFFGTWF. Topologically, residues 449–451 are lumenal; sequence NKY. A helical transmembrane segment spans residues 452-472; it reads WFVMHMLIWMLTDYVQYHTLI. Residues 473–501 lie on the Cytoplasmic side of the membrane; that stretch reads NHTLDVKNITYLPNWLNESIPPKQRNCLQ. Residues 502–522 form a helical membrane-spanning segment; sequence WGYIWILRELLALPIWIIAMI. At 523–544 the chain is on the lumenal side; it reads GHEIDWRGRPFRIKKDLTAEEM.

Belongs to the glycosyltransferase 2 family.

It is found in the golgi apparatus membrane. It catalyses the reaction an N-acylsphing-4-enine + UDP-alpha-D-glucose = a beta-D-glucosyl-(1&lt;-&gt;1')-N-acylsphing-4-enine + UDP + H(+). It functions in the pathway lipid metabolism; sphingolipid metabolism. Its function is as follows. Catalyzes the final step in the biosynthesis of the membrane lipid glucosylceramide (GluCer), the transfer of glucose to ceramide. Glucosylceramides play important roles in growth, differentiation and pathogenicity. The protein is Ceramide glucosyltransferase of Candida albicans (strain SC5314 / ATCC MYA-2876) (Yeast).